An 841-amino-acid chain; its full sequence is Protein translocase subunit SecA (841 aa).

ATP-binding positions include glutamine 85, 103 to 107 (GEGKT), and aspartate 492. Positions 788–841 (EVVQGQTTAHQPQEGDEEKTVKKKPVRKVVDIGRNSPCHCGSGKKYKNCHGKTE) are disordered. Zn(2+) contacts are provided by cysteine 825, cysteine 827, cysteine 836, and histidine 837. Residues 829-841 (SGKKYKNCHGKTE) are compositionally biased toward basic residues.

Belongs to the SecA family. Monomer and homodimer. Part of the essential Sec protein translocation apparatus which comprises SecA, SecYEG and auxiliary proteins SecDF. Other proteins may also be involved. Zn(2+) serves as cofactor.

The protein resides in the cell membrane. It localises to the cytoplasm. It catalyses the reaction ATP + H2O + cellular proteinSide 1 = ADP + phosphate + cellular proteinSide 2.. Part of the Sec protein translocase complex. Interacts with the SecYEG preprotein conducting channel. Has a central role in coupling the hydrolysis of ATP to the transfer of proteins into and across the cell membrane, serving as an ATP-driven molecular motor driving the stepwise translocation of polypeptide chains across the membrane. This is Protein translocase subunit SecA from Bacillus pumilus (strain SAFR-032).